Here is a 398-residue protein sequence, read N- to C-terminus: MPVPASWPHLPSPFLLMTLLLGRLTGVAGEEELQVIQPDKSISVAAGESATLHCTVTSLIPVGPIQWFRGAGPGRELIYNQKEGHFPRVTTVSDLTKRNNMDFSIRISNITPADAGTYYCVKFRKGSPDHVEFKSGAGTELSVRAKPSAPVVSGPAARATPQHTVSFTCESHGFSPRDITLKWFKNGNELSDFQTNVDPAGDSVSYSIHSTAKVVLTREDVHSQVICEVAHVTLQGDPLRGTANLSETIRVPPTLEVTQQPVRAENQVNVTCQVRKFYPQRLQLTWLENGNVSRTETASTLTENKDGTYNWMSWLLVNVSAHRDDVKLTCQVEHDGQPAVSKSHDLKVSAHPKEQGSNTAPGPALASAAPLLIAFLLGPKVLLVVGVSVIYVYWKQKA.

Positions 1–29 (MPVPASWPHLPSPFLLMTLLLGRLTGVAG) are cleaved as a signal peptide. Over 30 to 371 (EEELQVIQPD…GPALASAAPL (342 aa)) the chain is Extracellular. In terms of domain architecture, Ig-like V-type spans 31–136 (EELQVIQPDK…SPDHVEFKSG (106 aa)). Intrachain disulfides connect Cys-54–Cys-120 and Cys-169–Cys-227. Ig-like C1-type domains lie at 147-246 (PSAP…ANLS) and 253-347 (PTLE…HDLK). N-linked (GlcNAc...) asparagine glycans are attached at residues Asn-244, Asn-291, and Asn-318. Cysteines 272 and 330 form a disulfide. The span at 337–354 (QPAVSKSHDLKVSAHPKE) shows a compositional bias: basic and acidic residues. Positions 337-361 (QPAVSKSHDLKVSAHPKEQGSNTAP) are disordered. The helical transmembrane segment at 372–392 (LIAFLLGPKVLLVVGVSVIYV) threads the bilayer. Topologically, residues 393 to 398 (YWKQKA) are cytoplasmic.

Its subcellular location is the membrane. Immunoglobulin-like cell surface receptor involved in the negative regulation of receptor tyrosine kinase-coupled signaling processes. The chain is Signal-regulatory protein beta-1 isoform 3 (SIRPB1) from Homo sapiens (Human).